Reading from the N-terminus, the 175-residue chain is Ribosome maturation factor RimM (175 aa).

In terms of domain architecture, PRC barrel spans 96–172 (PDTYYDHQLE…LIEIDPPDGL (77 aa)).

The protein belongs to the RimM family. In terms of assembly, binds ribosomal protein uS19.

The protein localises to the cytoplasm. In terms of biological role, an accessory protein needed during the final step in the assembly of 30S ribosomal subunit, possibly for assembly of the head region. Essential for efficient processing of 16S rRNA. May be needed both before and after RbfA during the maturation of 16S rRNA. It has affinity for free ribosomal 30S subunits but not for 70S ribosomes. In Mycobacterium avium (strain 104), this protein is Ribosome maturation factor RimM.